Consider the following 723-residue polypeptide: Tripartite motif-containing protein 42 (723 aa).

An RING-type zinc finger spans residues 146–192 (CPMCSRLRLHSFMLPCNHSLCEKCLRQLQKHAEVTENFFILICPVCD). 2 consecutive B box-type zinc fingers follow at residues 235 to 280 (PILC…FVDT) and 285 to 326 (QDEK…TISL). Zn(2+)-binding residues include cysteine 290, histidine 293, cysteine 313, and histidine 318. Positions 382–407 (KLRSILQEKEKIIMEQIENLEVSRQK) form a coiled coil. The COS domain maps to 434-492 (LKETGQVAFLQSAKILVDQIEDGIQTTYRPDPQLRLHSINYVPLDFVELSSAIHELFPT). The 99-residue stretch at 603 to 701 (TPGPIVIYQT…DICKVVTPDG (99 aa)) folds into the Fibronectin type-III domain.

It belongs to the TRIM/RBCC family.

The sequence is that of Tripartite motif-containing protein 42 (TRIM42) from Homo sapiens (Human).